The sequence spans 632 residues: Serine/threonine-protein kinase plk-2 (632 aa).

The interval 1-26 (MQRVQPSAARVKSQKKEKAPPDVPDV) is disordered. In terms of domain architecture, Protein kinase spans 36–287 (YEKGKFLGKG…ARAVCRDHFF (252 aa)). Residues 42–50 (LGKGGFAHC) and Lys-65 each bind ATP. Asp-159 functions as the Proton acceptor in the catalytic mechanism. A disordered region spans residues 313–334 (AEENVSPSGTIDQRGPHQAGRS). 2 consecutive POLO box domains span residues 405 to 484 (WISK…YMND) and 506 to 588 (TLRV…RLVE).

It belongs to the protein kinase superfamily. Ser/Thr protein kinase family. CDC5/Polo subfamily. As to quaternary structure, interacts (via POLO box domain) with mex-5 and mex-6. Interacts (via POLO box domain) with him-8 (via N-terminus); the interaction mediates plk-2 recruitment to the pairing region of X chromosomes during meiosis. Interacts with sun-1. May interact with nicotinic acetylcholine receptor. Mg(2+) serves as cofactor. Expressed in oocytes.

Its subcellular location is the nucleus. It localises to the cytoplasm. The protein localises to the cytoskeleton. It is found in the microtubule organizing center. The protein resides in the centrosome. Its subcellular location is the chromosome. It localises to the centromere. The protein localises to the kinetochore. It catalyses the reaction L-seryl-[protein] + ATP = O-phospho-L-seryl-[protein] + ADP + H(+). The catalysed reaction is L-threonyl-[protein] + ATP = O-phospho-L-threonyl-[protein] + ADP + H(+). Functionally, serine/threonine-protein kinase which plays a role, during oogenesis, in chromosome pairing and synapsis, by facilitating the recruitment and attachment of meiotic chromosomes to the nuclear envelope during prophase. Promotes the localization of brc-1 to the short arm of homologous chromosomes during meiotic prophase I. Regulates the formation of sun-1 patches along the nuclear envelope. Promotes meiotic nuclei apoptosis in response to chromosomal asynapsis. Plays a redundant role with plk-1 in the establishment of cell polarity downstream of mex-5 and mex-6 during the first embryonic cell divisions. Plays a role in nicotinic acetylcholine receptor-mediated sensitivity to nicotine but not levamisole. Regulates motility. The sequence is that of Serine/threonine-protein kinase plk-2 from Caenorhabditis elegans.